Here is a 382-residue protein sequence, read N- to C-terminus: uncharacterized protein (382 aa).

Residues methionine 1 to phenylalanine 92 form the PE domain. The next 8 membrane-spanning stretches (helical) occupy residues serine 23–alanine 43, alanine 155–valine 175, phenylalanine 203–glycine 223, threonine 230–valine 250, leucine 261–phenylalanine 281, alanine 284–valine 304, leucine 315–alanine 335, and leucine 347–glycine 367.

The protein belongs to the mycobacterial PE family.

The protein localises to the cell membrane. This is an uncharacterized protein from Mycobacterium bovis (strain ATCC BAA-935 / AF2122/97).